A 185-amino-acid chain; its full sequence is Male-enhanced antigen 1 (185 aa).

2 disordered regions span residues 1–90 and 104–134; these read MGPE…VGDG and GLHLPDPPLESEDEDEEGATALNNHSSIPMD. Acidic residues-rich tracts occupy residues 50–60 and 112–121; these read SSEEPEEEQEE and LESEDEDEEG. The residue at position 114 (S114) is a Phosphoserine.

As to expression, highly expressed in testis.

May play an important role in spermatogenesis and/or testis development. In Homo sapiens (Human), this protein is Male-enhanced antigen 1 (MEA1).